Consider the following 436-residue polypeptide: 3-ketoacyl-CoA thiolase (436 aa).

The active-site Acyl-thioester intermediate is Cys-99. Residues His-392 and Cys-422 each act as proton acceptor in the active site.

It belongs to the thiolase-like superfamily. Thiolase family. As to quaternary structure, heterotetramer of two alpha chains (FadJ) and two beta chains (FadI).

The protein resides in the cytoplasm. The catalysed reaction is an acyl-CoA + acetyl-CoA = a 3-oxoacyl-CoA + CoA. It participates in lipid metabolism; fatty acid beta-oxidation. In terms of biological role, catalyzes the final step of fatty acid oxidation in which acetyl-CoA is released and the CoA ester of a fatty acid two carbons shorter is formed. In Shewanella loihica (strain ATCC BAA-1088 / PV-4), this protein is 3-ketoacyl-CoA thiolase.